The following is a 351-amino-acid chain: Outer membrane porin PhoE (351 aa).

The signal sequence occupies residues 1–21 (MKKSTLALVVMGITASASVQA).

It belongs to the Gram-negative porin family. In terms of assembly, homotrimer.

It is found in the cell outer membrane. Its function is as follows. Uptake of inorganic phosphate, phosphorylated compounds, and some other negatively charged solutes. The sequence is that of Outer membrane porin PhoE (phoE) from Citrobacter freundii.